Here is a 791-residue protein sequence, read N- to C-terminus: Protein SEY1 (791 aa).

Over M1 to H685 the chain is Cytoplasmic. The region spanning G40–Y268 is the GB1/RHD3-type G domain. G50–S57 serves as a coordination point for GTP. The helical transmembrane segment at I686–L706 threads the bilayer. Topologically, residues R707–P709 are lumenal. Residues L710–L730 form a helical membrane-spanning segment. Residues W731–S791 lie on the Cytoplasmic side of the membrane. The tract at residues P763–S791 is disordered.

This sequence belongs to the TRAFAC class dynamin-like GTPase superfamily. GB1/RHD3 GTPase family. RHD3 subfamily.

Its subcellular location is the endoplasmic reticulum membrane. Its function is as follows. Cooperates with the reticulon proteins and tubule-shaping DP1 family proteins to generate and maintain the structure of the tubular endoplasmic reticulum network. Has GTPase activity, which is required for its function in ER organization. In Eremothecium gossypii (strain ATCC 10895 / CBS 109.51 / FGSC 9923 / NRRL Y-1056) (Yeast), this protein is Protein SEY1.